A 444-amino-acid chain; its full sequence is Chromosome partition protein MukF (444 aa).

The tract at residues 212 to 240 (LDETSGNLRELQDTLNAAGDKLQAQLLRI) is leucine-zipper.

The protein belongs to the MukF family. Interacts, and probably forms a ternary complex, with MukE and MukB via its C-terminal region. The complex formation is stimulated by calcium or magnesium. It is required for an interaction between MukE and MukB.

It is found in the cytoplasm. It localises to the nucleoid. In terms of biological role, involved in chromosome condensation, segregation and cell cycle progression. May participate in facilitating chromosome segregation by condensation DNA from both sides of a centrally located replisome during cell division. Not required for mini-F plasmid partitioning. Probably acts via its interaction with MukB and MukE. Overexpression results in anucleate cells. It has a calcium binding activity. This Haemophilus influenzae (strain PittGG) protein is Chromosome partition protein MukF.